The primary structure comprises 279 residues: Glutamate racemase (279 aa).

Substrate contacts are provided by residues 13–14 (DS) and 45–46 (YG). The active-site Proton donor/acceptor is the cysteine 76. 77 to 78 (NT) is a substrate binding site. Catalysis depends on cysteine 185, which acts as the Proton donor/acceptor. 186–187 (TH) is a substrate binding site.

The protein belongs to the aspartate/glutamate racemases family.

The enzyme catalyses L-glutamate = D-glutamate. It functions in the pathway cell wall biogenesis; peptidoglycan biosynthesis. Functionally, provides the (R)-glutamate required for cell wall biosynthesis. The polypeptide is Glutamate racemase (Synechocystis sp. (strain ATCC 27184 / PCC 6803 / Kazusa)).